Reading from the N-terminus, the 974-residue chain is Short transient receptor potential channel 4 (974 aa).

The Cytoplasmic portion of the chain corresponds to 1-324 (MAQFYYKRNV…YDEFPGWRRR (324 aa)). ANK repeat units follow at residues 29-60 (LSPS…IYFK), 71-93 (RTAL…LSFN), 96-118 (VGDA…LLNH), and 141-165 (PDIT…VQKG). The tract at residues 87–172 (ELLLSFNVYV…QKGVSVPRPH (86 aa)) is multimerization domain. H172, C176, C178, and C181 together coordinate Zn(2+). A coiled-coil region spans residues 223 to 260 (LSWELQELSKVENEFKSEYEELSRQCKQFAKDLLDQTR). The segment at 254–304 (DLLDQTRSSRELEIILNYRDDNSLIEEQSGNDLARLKLAIKYRQKEFVAQP) is multimerization domain. Residues 325-359 (HWAVKMVTCFIIGLLFPVFSVCYLIAPKSPLGLFI) constitute an intramembrane region (discontinuously helical). At 360 to 362 (RKP) the chain is on the cytoplasmic side. The chain crosses the membrane as a helical span at residues 363–383 (FIKFICHTASYLTFLFLLLLA). Topologically, residues 384 to 403 (SQHIDRSDLNRQGPPPTIVE) are extracellular. The chain crosses the membrane as a helical span at residues 404–418 (WMILPWVLGFIWGEI). The Ca(2+) site is built by E417, Q420, N435, and D438. At 419 to 432 (KQMWDGGLQDYIHD) the chain is on the cytoplasmic side. A helical transmembrane segment spans residues 433-453 (WWNLMDFVMNSLYLATISLKI). Topologically, residues 454–475 (VAFVKYSALNPRESWDMWHPTL) are extracellular. The helical transmembrane segment at 476 to 498 (VAEALFAIANIFSSLRLISLFTA) threads the bilayer. At 499-511 (NSHLGPLQISLGR) the chain is on the cytoplasmic side. Residues 512 to 534 (MLLDILKFLFIYCLVLLAFANGL) traverse the membrane as a helical segment. Residues 535–599 (NQLYFYYEET…HEFTEFVGAT (65 aa)) are Extracellular-facing. Cysteines 549 and 554 form a disulfide. The helical transmembrane segment at 600–620 (MFGTYNVISLVVLLNMLIAMM) threads the bilayer. The tract at residues 615 to 974 (MLIAMMNNSY…AHEDYVTTRL (360 aa)) is interaction with ITPR1, ITPR2 and ITPR3. The Cytoplasmic segment spans residues 621 to 974 (NNSYQLIADH…AHEDYVTTRL (354 aa)). The segment at 765-787 (ANAASSADSDEKSQSEGNGKDKR) is disordered. The segment covering 773-784 (SDEKSQSEGNGK) has biased composition (basic and acidic residues). Phosphotyrosine; by FYN occurs at positions 956 and 969. Residues 972–974 (TRL) form a PDZ-binding domain region.

It belongs to the transient receptor (TC 1.A.4) family. STrpC subfamily. TRPC4 sub-subfamily. In terms of assembly, homotetramer. Heterotetramer with TRPC1 and/or TRPC5. Forms a heteromeric ion channel with TRPC1, with a 1:3 TRPC1:TRPC4 stoichiometry. Interacts with TRPC4AP. Isoform alpha but not isoform beta interacts with ITPR1, ITPR2 and ITPR3. Interacts with NHERF1. Interacts with MX1 and RNF24. Interacts (via CIRB domain) with SESTD1 (via the spectrin 1 repeat) and SPTBN5 (via C-terminus). Interacts with CDH5 and CTNNB1. Interacts (via protein 4.1-binding domain) with EPB41L2. Interacts with PLSCR1. Abundantly expressed in brain (hippocampal CA1 pyramidal neurons, dentate gyrus granule cells, and cerebral cortical neurons, and in the septal nuclei and the mitral layer of olfactory bulb). Lower levels are detected in other tissues.

The protein localises to the cell membrane. The catalysed reaction is Ca(2+)(in) = Ca(2+)(out). The enzyme catalyses Na(+)(in) = Na(+)(out). It carries out the reaction Li(+)(in) = Li(+)(out). It catalyses the reaction Cs(+)(in) = Cs(+)(out). May be operated by a phosphatidylinositol second messenger system activated by receptor tyrosine kinases or G-protein coupled receptors. May be activated by intracellular calcium store depletion. Forms a receptor-activated non-selective calcium permeant cation channel. Acts as a cell-cell contact-dependent endothelial calcium entry channel. Forms a homomeric ion channel or a heteromeric ion channel with TRPC1; the heteromeric ion channel has reduced calcium permeability compared to the homomeric channel. Also permeable to monovalent ions including sodium, lithium and cesium ions. This chain is Short transient receptor potential channel 4 (Trpc4), found in Mus musculus (Mouse).